A 229-amino-acid chain; its full sequence is Ribosome maturation factor RimM (229 aa).

The disordered stretch occupies residues 1 to 39; the sequence is MAGHDSGSAKRGRSPSFGVFVRKPVERAPTKGAGDGAAD. A PRC barrel domain is found at 148–229; it reads ADEFYWVDLI…RIVVDWEADY (82 aa).

Belongs to the RimM family. Binds ribosomal protein uS19.

It is found in the cytoplasm. An accessory protein needed during the final step in the assembly of 30S ribosomal subunit, possibly for assembly of the head region. Essential for efficient processing of 16S rRNA. May be needed both before and after RbfA during the maturation of 16S rRNA. It has affinity for free ribosomal 30S subunits but not for 70S ribosomes. The protein is Ribosome maturation factor RimM of Burkholderia thailandensis (strain ATCC 700388 / DSM 13276 / CCUG 48851 / CIP 106301 / E264).